The primary structure comprises 368 residues: NAD(P)H-quinone oxidoreductase subunit 1, chloroplastic (368 aa).

A run of 9 helical transmembrane segments spans residues 11-31, 33-53, 98-118, 131-151, 177-197, 205-225, 255-275, 305-325, and 348-368; these read RVIN…LIWI, IYIL…VWLE, WLFS…YLVI, IGVF…LMAG, LALC…VDIV, FWGW…ISSL, FGLF…FVTI, VLGI…FLFI, and FLLP…LLLL.

The protein belongs to the complex I subunit 1 family. NDH is composed of at least 16 different subunits, 5 of which are encoded in the nucleus.

It localises to the plastid. The protein localises to the chloroplast thylakoid membrane. The enzyme catalyses a plastoquinone + NADH + (n+1) H(+)(in) = a plastoquinol + NAD(+) + n H(+)(out). It carries out the reaction a plastoquinone + NADPH + (n+1) H(+)(in) = a plastoquinol + NADP(+) + n H(+)(out). NDH shuttles electrons from NAD(P)H:plastoquinone, via FMN and iron-sulfur (Fe-S) centers, to quinones in the photosynthetic chain and possibly in a chloroplast respiratory chain. The immediate electron acceptor for the enzyme in this species is believed to be plastoquinone. Couples the redox reaction to proton translocation, and thus conserves the redox energy in a proton gradient. In Cycas taitungensis (Prince sago), this protein is NAD(P)H-quinone oxidoreductase subunit 1, chloroplastic.